The primary structure comprises 301 residues: Homoserine kinase (301 aa).

81-91 (RPSSGLGSSAA) lines the ATP pocket.

Belongs to the GHMP kinase family. Homoserine kinase subfamily.

It is found in the cytoplasm. The catalysed reaction is L-homoserine + ATP = O-phospho-L-homoserine + ADP + H(+). The protein operates within amino-acid biosynthesis; L-threonine biosynthesis; L-threonine from L-aspartate: step 4/5. Its function is as follows. Catalyzes the ATP-dependent phosphorylation of L-homoserine to L-homoserine phosphate. The protein is Homoserine kinase of Halobacterium salinarum (strain ATCC 29341 / DSM 671 / R1).